Here is a 517-residue protein sequence, read N- to C-terminus: Cytochrome P450 monooxygenase ausI (517 aa).

A helical transmembrane segment spans residues 8–28; the sequence is LAPLGQPWIAGLVVVSAVLYL. Cysteine 457 contributes to the heme binding site.

This sequence belongs to the cytochrome P450 family. It depends on heme as a cofactor.

It localises to the membrane. The protein operates within secondary metabolite biosynthesis; terpenoid biosynthesis. Its function is as follows. Cytochrome P450 monooxygenase; part of the gene cluster that mediates the biosynthesis of calidodehydroaustin, a fungal meroterpenoid. The first step of the pathway is the synthesis of 3,5-dimethylorsellinic acid by the polyketide synthase ausA. 3,5-dimethylorsellinic acid is then prenylated by the polyprenyl transferase ausN. Further epoxidation by the FAD-dependent monooxygenase ausM and cyclization by the probable terpene cyclase ausL lead to the formation of protoaustinoid A. Protoaustinoid A is then oxidized to spiro-lactone preaustinoid A3 by the combined action of the FAD-binding monooxygenases ausB and ausC, and the dioxygenase ausE. Acid-catalyzed keto-rearrangement and ring contraction of the tetraketide portion of preaustinoid A3 by ausJ lead to the formation of preaustinoid A4. The aldo-keto reductase ausK, with the help of ausH, is involved in the next step by transforming preaustinoid A4 into isoaustinone which is in turn hydroxylated by the P450 monooxygenase ausI to form austinolide. The cytochrome P450 monooxygenase ausG modifies austinolide to austinol. Austinol is further acetylated to austin by the O-acetyltransferase ausP, which spontaneously changes to dehydroaustin. The cytochrome P450 monooxygenase ausR then converts dehydroaustin is into 7-dehydrodehydroaustin. The hydroxylation catalyzed by ausR permits the O-acetyltransferase ausQ to add an additional acetyl group to the molecule, leading to the formation of acetoxydehydroaustin. The short chain dehydrogenase ausT catalyzes the reduction of the double bond present between carbon atoms 1 and 2 to convert 7-dehydrodehydroaustin into 1,2-dihydro-7-hydroxydehydroaustin. AusQ catalyzes not only an acetylation reaction but also the addition of the PKS ausV diketide product to 1,2-dihydro-7-hydroxydehydroaustin, forming precalidodehydroaustin. Finally, the iron/alpha-ketoglutarate-dependent dioxygenase converts precalidodehydroaustin into calidodehydroaustin. In Aspergillus calidoustus, this protein is Cytochrome P450 monooxygenase ausI.